A 547-amino-acid chain; its full sequence is Chaperonin GroEL (547 aa).

ATP is bound by residues 30-33 (TLGP), K51, 87-91 (DGTTT), G415, and D495. The segment at 526–547 (KKDTPVPPMPGGGMGGMGGMDF) is disordered. Residues 536–547 (GGGMGGMGGMDF) show a composition bias toward gly residues.

It belongs to the chaperonin (HSP60) family. As to quaternary structure, forms a cylinder of 14 subunits composed of two heptameric rings stacked back-to-back. Interacts with the co-chaperonin GroES.

The protein resides in the cytoplasm. The catalysed reaction is ATP + H2O + a folded polypeptide = ADP + phosphate + an unfolded polypeptide.. Its function is as follows. Together with its co-chaperonin GroES, plays an essential role in assisting protein folding. The GroEL-GroES system forms a nano-cage that allows encapsulation of the non-native substrate proteins and provides a physical environment optimized to promote and accelerate protein folding. This is Chaperonin GroEL from Bartonella henselae (strain ATCC 49882 / DSM 28221 / CCUG 30454 / Houston 1) (Rochalimaea henselae).